The following is a 596-amino-acid chain: MSGLTSVAQAEDLWRKIQLRRCKREQERLKPPDVELRDGDFRLRGLVAGERLLEWEFIENETGVATLQLSLSHYLAKWVMNHRGRAKRNVILNVEKQGARWSGMMDHYRVVKEDSGDCYLEIVFLHDFEQTKHIRVWCNPFLRPELQFPKIWIIFGPAKWCLLVTLFVNLLRLETSLWTIPDDPTDIWEWMGPSFNPSKWRNIVKPFPFLLDNSPITMVFSRFGTFYDTAKQILENHQLTLTCRRYIKDRDPHPFDDLKGLWGIDPVEGLLQLIPLRDGCVVWDIEDNSGWGTETAFGGSWLTGFVRAVVNLAGDGQVEGVDVFTGDYTFPGEYYSPWFLGTSPRAPHVVFEEGPLTGIKSSEFSYYEATDTSFLAGGQSAPGINEGISALVNIGGDLLTSFINSQLAVLGAVGGAIDLPPLGGLMDAVLNPLYSDVFGAFMEVPTLRAMGISLPIAGLEDIVTGLGDFHYYENMVDSPMKAFTLSAFAAIAAQIHKTRARTAHTLKVSDAAPYIFAPKPYGHCWIGDRVGTSVLGYPVEHQLFVERIRKVKYRIDKDGMKPLEIEIGYREPKNPALHILEEIKRFNGAMGQAGIL.

In Mycobacterium phage D29 (Mycobacteriophage D29), this protein is Minor tail protein Gp28 (28).